Consider the following 347-residue polypeptide: Selenide, water dikinase (347 aa).

Cysteine 17 is a catalytic residue. Residues lysine 20 and 48–50 contribute to the ATP site; that span reads TRD. Mg(2+) is bound at residue aspartate 51. ATP is bound by residues aspartate 68, aspartate 91, and 139–141; that span reads GHS. Aspartate 91 lines the Mg(2+) pocket. Aspartate 227 contributes to the Mg(2+) binding site.

Belongs to the selenophosphate synthase 1 family. Class I subfamily. As to quaternary structure, homodimer. Requires Mg(2+) as cofactor.

It catalyses the reaction hydrogenselenide + ATP + H2O = selenophosphate + AMP + phosphate + 2 H(+). Its function is as follows. Synthesizes selenophosphate from selenide and ATP. The protein is Selenide, water dikinase of Salmonella typhimurium (strain LT2 / SGSC1412 / ATCC 700720).